A 264-amino-acid chain; its full sequence is Thymidylate synthase (264 aa).

Residue arginine 21 participates in dUMP binding. (6R)-5,10-methylene-5,6,7,8-tetrahydrofolate is bound at residue histidine 51. 126-127 serves as a coordination point for dUMP; that stretch reads RR. The active-site Nucleophile is cysteine 146. DUMP contacts are provided by residues 166–169, asparagine 177, and 207–209; these read RSAD and HLY. Residue aspartate 169 coordinates (6R)-5,10-methylene-5,6,7,8-tetrahydrofolate. Alanine 263 is a (6R)-5,10-methylene-5,6,7,8-tetrahydrofolate binding site.

The protein belongs to the thymidylate synthase family. Bacterial-type ThyA subfamily. Homodimer.

The protein resides in the cytoplasm. It catalyses the reaction dUMP + (6R)-5,10-methylene-5,6,7,8-tetrahydrofolate = 7,8-dihydrofolate + dTMP. It functions in the pathway pyrimidine metabolism; dTTP biosynthesis. Catalyzes the reductive methylation of 2'-deoxyuridine-5'-monophosphate (dUMP) to 2'-deoxythymidine-5'-monophosphate (dTMP) while utilizing 5,10-methylenetetrahydrofolate (mTHF) as the methyl donor and reductant in the reaction, yielding dihydrofolate (DHF) as a by-product. This enzymatic reaction provides an intracellular de novo source of dTMP, an essential precursor for DNA biosynthesis. The sequence is that of Thymidylate synthase from Chelativorans sp. (strain BNC1).